The sequence spans 60 residues: Potassium channel toxin-like Tx677 (60 aa).

Positions 1–22 (MKISALVMITLLICSMMILCQG) are cleaved as a signal peptide. Cystine bridges form between cysteine 30–cysteine 51, cysteine 36–cysteine 56, and cysteine 40–cysteine 58.

The protein belongs to the short scorpion toxin superfamily. Potassium channel inhibitor family. In terms of tissue distribution, expressed by the venom gland.

The protein resides in the secreted. Its function is as follows. Weakly inhibits Kv11.1/KCNH2/ERG1, Kv1.2/KCNA2 and Kv1.3/KCNA3 voltage-gated potassium channels. This is Potassium channel toxin-like Tx677 from Buthus israelis (Israeli scorpion).